Reading from the N-terminus, the 266-residue chain is ES1 protein homolog, mitochondrial (266 aa).

Residues 1–39 (MAAVRVLVSPRLASALLPLSGRHRTTSQRAAIHSSAPRP) constitute a mitochondrion transit peptide. 3 positions are modified to N6-acetyllysine: lysine 149, lysine 155, and lysine 162. N6-acetyllysine; alternate is present on lysine 201. Lysine 201 carries the post-translational modification N6-succinyllysine; alternate. At lysine 217 the chain carries N6-acetyllysine. An N6-acetyllysine; alternate mark is found at lysine 221 and lysine 231. N6-succinyllysine; alternate occurs at positions 221 and 231.

Belongs to the ES1 family.

The protein resides in the mitochondrion. This is ES1 protein homolog, mitochondrial from Rattus norvegicus (Rat).